Here is a 352-residue protein sequence, read N- to C-terminus: Endophilin-A1 (352 aa).

Positions 1 to 21 are membrane-binding amphipathic helix; it reads MSVAGLKKQFHKATQKVSEKV. The interval 1-27 is disordered; sequence MSVAGLKKQFHKATQKVSEKVGGAEGT. A binds and tubulates liposomes region spans residues 1-125; the sequence is MSVAGLKKQF…EVGEAMRELS (125 aa). The BAR domain occupies 18–249; that stretch reads SEKVGGAEGT…LEERIRQASS (232 aa). The required for dimerization upon membrane association stretch occupies residues 60–87; the sequence is PNPASRAKLSMINTMSKIRGQEKGPGYP. The stretch at 181-248 forms a coiled coil; sequence EELRQALEKF…RLEERIRQAS (68 aa). Ser-262 carries the post-translational modification Phosphoserine. The interval 264–289 is disordered; it reads EFATGDSTQPNGGLSHTGTPKPPGVQ. Positions 268-281 are enriched in polar residues; the sequence is GDSTQPNGGLSHTG. The region spanning 290 to 349 is the SH3 domain; sequence MDQPCCRALYDFEPENEGELGFKEGDIITLTNQIDENWYEGMLHGQSGFFPINYVEILVA. Tyr-299 bears the Phosphotyrosine mark.

This sequence belongs to the endophilin family. As to quaternary structure, monomer; in cytoplasm. Homodimer; when associated with membranes. Interacts with SYNJ1. Interacts with DNM1. Interacts with MAP4K3; the interaction appears to regulate MAP4K3-mediated JNK activation. Interacts with OPHN1. Interacts with PDCD6IP. Interacts with BIN2. Interacts with ATXN2. Interacts with ADAM9 and ADAM15 cytoplasmic tails. Interacts with TMEM108. Interacts with ADGRB2.

Its subcellular location is the cytoplasm. It is found in the membrane. The protein localises to the early endosome. It localises to the presynapse. Functionally, implicated in synaptic vesicle endocytosis. May recruit other proteins to membranes with high curvature. Required for BDNF-dependent dendrite outgrowth. Cooperates with SH3GL2 to mediate BDNF-NTRK2 early endocytic trafficking and signaling from early endosomes. The chain is Endophilin-A1 (Sh3gl2) from Mus musculus (Mouse).